A 566-amino-acid chain; its full sequence is 2-isopropylmalate synthase (566 aa).

The Pyruvate carboxyltransferase domain occupies P32–D306. Residues D41, H245, H247, and N281 each coordinate Mg(2+). Residues P451–R566 form a regulatory domain region.

It belongs to the alpha-IPM synthase/homocitrate synthase family. LeuA type 2 subfamily. In terms of assembly, homodimer. Requires Mg(2+) as cofactor.

Its subcellular location is the cytoplasm. It catalyses the reaction 3-methyl-2-oxobutanoate + acetyl-CoA + H2O = (2S)-2-isopropylmalate + CoA + H(+). The protein operates within amino-acid biosynthesis; L-leucine biosynthesis; L-leucine from 3-methyl-2-oxobutanoate: step 1/4. Functionally, catalyzes the condensation of the acetyl group of acetyl-CoA with 3-methyl-2-oxobutanoate (2-ketoisovalerate) to form 3-carboxy-3-hydroxy-4-methylpentanoate (2-isopropylmalate). This is 2-isopropylmalate synthase from Mycobacterium ulcerans (strain Agy99).